Reading from the N-terminus, the 899-residue chain is 1,4-alpha-glucan-branching enzyme 3, chloroplastic/amyloplastic (899 aa).

The N-terminal 49 residues, 1–49 (MVSLSNQTRFSFHPNNLVVSEKRRLGISGVNFPRKIKLKITCFAAERPR), are a transit peptide targeting the chloroplast. A disordered region spans residues 47–67 (RPRQEKQKKKSQSQSTSDAEA). Glu-612 serves as the catalytic Proton donor.

Belongs to the glycosyl hydrolase 13 family. GlgB subfamily. As to quaternary structure, monomer. In terms of tissue distribution, mostly expressed in flowers and inflorescence, and, to a lower extent, in seedlings, roots, stems, leaves, siliques and seeds.

It localises to the plastid. The protein resides in the chloroplast stroma. Its subcellular location is the amyloplast. It catalyses the reaction Transfers a segment of a (1-&gt;4)-alpha-D-glucan chain to a primary hydroxy group in a similar glucan chain.. Its pathway is glycan biosynthesis; starch biosynthesis. Functionally, catalyzes the formation of the alpha-1,6-glucosidic linkages in starch by scission of a 1,4-alpha-linked oligosaccharide from growing alpha-1,4-glucan chains and the subsequent attachment of the oligosaccharide to the alpha-1,6 position. Essential during embryogenesis. This chain is 1,4-alpha-glucan-branching enzyme 3, chloroplastic/amyloplastic (SBE3), found in Arabidopsis thaliana (Mouse-ear cress).